Reading from the N-terminus, the 194-residue chain is Peptidyl-tRNA hydrolase (194 aa).

Tyrosine 17 is a binding site for tRNA. Catalysis depends on histidine 22, which acts as the Proton acceptor. TRNA-binding residues include tyrosine 68, asparagine 70, and asparagine 116.

Belongs to the PTH family. Monomer.

The protein resides in the cytoplasm. It carries out the reaction an N-acyl-L-alpha-aminoacyl-tRNA + H2O = an N-acyl-L-amino acid + a tRNA + H(+). Its function is as follows. Hydrolyzes ribosome-free peptidyl-tRNAs (with 1 or more amino acids incorporated), which drop off the ribosome during protein synthesis, or as a result of ribosome stalling. Catalyzes the release of premature peptidyl moieties from peptidyl-tRNA molecules trapped in stalled 50S ribosomal subunits, and thus maintains levels of free tRNAs and 50S ribosomes. This chain is Peptidyl-tRNA hydrolase, found in Pseudomonas syringae pv. syringae (strain B728a).